The chain runs to 216 residues: uncharacterized protein (216 aa).

4Fe-4S ferredoxin-type domains are found at residues 160–189 (DDKP…IDEK) and 188–216 (EKPK…ALLP). Residues Cys-169, Cys-172, Cys-175, Cys-179, Cys-197, Cys-200, Cys-203, and Cys-207 each contribute to the [4Fe-4S] cluster site.

It belongs to the FrhG family.

This is an uncharacterized protein from Methanocaldococcus jannaschii (strain ATCC 43067 / DSM 2661 / JAL-1 / JCM 10045 / NBRC 100440) (Methanococcus jannaschii).